We begin with the raw amino-acid sequence, 311 residues long: Ribonuclease HIII (311 aa).

Residues 95–311 form the RNase H type-2 domain; sequence MSIVGSDEVG…NTEKAFRLLK (217 aa). Aspartate 101, glutamate 102, and aspartate 206 together coordinate a divalent metal cation.

Belongs to the RNase HII family. RnhC subfamily. Mn(2+) is required as a cofactor. The cofactor is Mg(2+).

The protein localises to the cytoplasm. It carries out the reaction Endonucleolytic cleavage to 5'-phosphomonoester.. Its function is as follows. Endonuclease that specifically degrades the RNA of RNA-DNA hybrids. This Bacillus thuringiensis subsp. konkukian (strain 97-27) protein is Ribonuclease HIII.